A 442-amino-acid chain; its full sequence is tRNA modification GTPase MnmE (442 aa).

Residues arginine 21, glutamate 79, and lysine 118 each contribute to the (6S)-5-formyl-5,6,7,8-tetrahydrofolate site. A TrmE-type G domain is found at 214–367 (GFKIAIVGKP…LKEELQNYLN (154 aa)). A K(+)-binding site is contributed by asparagine 224. GTP-binding positions include 224–229 (NVGKSS), 243–249 (SDIAGTT), and 268–271 (DTAG). Serine 228 contacts Mg(2+). Residues serine 243, isoleucine 245, and threonine 248 each coordinate K(+). Residue threonine 249 participates in Mg(2+) binding. Residue lysine 442 coordinates (6S)-5-formyl-5,6,7,8-tetrahydrofolate.

This sequence belongs to the TRAFAC class TrmE-Era-EngA-EngB-Septin-like GTPase superfamily. TrmE GTPase family. In terms of assembly, homodimer. Heterotetramer of two MnmE and two MnmG subunits. K(+) serves as cofactor.

It localises to the cytoplasm. Exhibits a very high intrinsic GTPase hydrolysis rate. Involved in the addition of a carboxymethylaminomethyl (cmnm) group at the wobble position (U34) of certain tRNAs, forming tRNA-cmnm(5)s(2)U34. In Campylobacter jejuni (strain RM1221), this protein is tRNA modification GTPase MnmE.